The sequence spans 250 residues: Ubiquinone/menaquinone biosynthesis C-methyltransferase UbiE (250 aa).

S-adenosyl-L-methionine contacts are provided by residues Ser-73, Asp-94, and 122–123 (NA).

The protein belongs to the class I-like SAM-binding methyltransferase superfamily. MenG/UbiE family.

The enzyme catalyses a 2-demethylmenaquinol + S-adenosyl-L-methionine = a menaquinol + S-adenosyl-L-homocysteine + H(+). It carries out the reaction a 2-methoxy-6-(all-trans-polyprenyl)benzene-1,4-diol + S-adenosyl-L-methionine = a 5-methoxy-2-methyl-3-(all-trans-polyprenyl)benzene-1,4-diol + S-adenosyl-L-homocysteine + H(+). It functions in the pathway quinol/quinone metabolism; menaquinone biosynthesis; menaquinol from 1,4-dihydroxy-2-naphthoate: step 2/2. It participates in cofactor biosynthesis; ubiquinone biosynthesis. Its function is as follows. Methyltransferase required for the conversion of demethylmenaquinol (DMKH2) to menaquinol (MKH2) and the conversion of 2-polyprenyl-6-methoxy-1,4-benzoquinol (DDMQH2) to 2-polyprenyl-3-methyl-6-methoxy-1,4-benzoquinol (DMQH2). The chain is Ubiquinone/menaquinone biosynthesis C-methyltransferase UbiE from Legionella pneumophila subsp. pneumophila (strain Philadelphia 1 / ATCC 33152 / DSM 7513).